The following is a 179-amino-acid chain: Large ribosomal subunit protein uL5 (179 aa).

Belongs to the universal ribosomal protein uL5 family. Part of the 50S ribosomal subunit; part of the 5S rRNA/L5/L18/L25 subcomplex. Contacts the 5S rRNA and the P site tRNA. Forms a bridge to the 30S subunit in the 70S ribosome.

This is one of the proteins that bind and probably mediate the attachment of the 5S RNA into the large ribosomal subunit, where it forms part of the central protuberance. In the 70S ribosome it contacts protein S13 of the 30S subunit (bridge B1b), connecting the 2 subunits; this bridge is implicated in subunit movement. Contacts the P site tRNA; the 5S rRNA and some of its associated proteins might help stabilize positioning of ribosome-bound tRNAs. The sequence is that of Large ribosomal subunit protein uL5 from Clostridium novyi (strain NT).